The sequence spans 309 residues: Ribonuclease Z (309 aa).

Zn(2+)-binding residues include histidine 63, histidine 65, aspartate 67, histidine 68, histidine 145, aspartate 216, and histidine 274. Catalysis depends on aspartate 67, which acts as the Proton acceptor.

This sequence belongs to the RNase Z family. In terms of assembly, homodimer. It depends on Zn(2+) as a cofactor.

It catalyses the reaction Endonucleolytic cleavage of RNA, removing extra 3' nucleotides from tRNA precursor, generating 3' termini of tRNAs. A 3'-hydroxy group is left at the tRNA terminus and a 5'-phosphoryl group is left at the trailer molecule.. Its function is as follows. Zinc phosphodiesterase, which displays some tRNA 3'-processing endonuclease activity. Probably involved in tRNA maturation, by removing a 3'-trailer from precursor tRNA. In Streptococcus gordonii (strain Challis / ATCC 35105 / BCRC 15272 / CH1 / DL1 / V288), this protein is Ribonuclease Z.